The sequence spans 217 residues: Dense granule protein 1 (217 aa).

The N-terminal stretch at 1–19 (MARQATFIVALCVCGLAIA) is a signal peptide. Residues 171–183 (VASEDSALGNSEE) show a composition bias toward polar residues. A disordered region spans residues 171-217 (VASEDSALGNSEEQYVEGTVNGSSDPEQERAGGPLIPEGDEQEVDTE). N-linked (GlcNAc...) asparagine glycosylation is present at Asn191. The span at 208–217 (EGDEQEVDTE) shows a compositional bias: acidic residues.

It belongs to the Gra7 family.

It localises to the secreted. This chain is Dense granule protein 1 (DG1), found in Neospora caninum (Coccidian parasite).